The following is a 310-amino-acid chain: MKILLANPRGFCAGVDRAITIVKNALHKFGAPVYVRHEVVHNKYVVDELKAMGAIFVDELDEIPDGNTVIFSAHGVPKRVREEARKRGLQVFDATCPLVTKVHMEVHRASRKGQEVVLIGHKGHPEVEGTLGQYDENGTGMYLVEDANQVDSLPVQQPEKVSFVTQTTLSVDETRDIIDALREHFPAIQGPRKDDICYATQNRQDAVRALAPQVDVMLVVGSKNSSNSNRLRELAERLGTRAYLLDDASQLQDEWFTNVNSVGVTAGASAPEVLVQSVIDRLYQLGGSKLEQMDGVIEDTVFEVPVELRV.

Cys12 contacts [4Fe-4S] cluster. The (2E)-4-hydroxy-3-methylbut-2-enyl diphosphate site is built by His41 and His74. Residues His41 and His74 each contribute to the dimethylallyl diphosphate site. Residues His41 and His74 each contribute to the isopentenyl diphosphate site. Position 96 (Cys96) interacts with [4Fe-4S] cluster. His124 contributes to the (2E)-4-hydroxy-3-methylbut-2-enyl diphosphate binding site. Position 124 (His124) interacts with dimethylallyl diphosphate. His124 lines the isopentenyl diphosphate pocket. Glu126 functions as the Proton donor in the catalytic mechanism. Thr167 contacts (2E)-4-hydroxy-3-methylbut-2-enyl diphosphate. Residue Cys197 coordinates [4Fe-4S] cluster. (2E)-4-hydroxy-3-methylbut-2-enyl diphosphate contacts are provided by Ser225, Ser226, Asn227, and Ser269. The dimethylallyl diphosphate site is built by Ser225, Ser226, Asn227, and Ser269. Isopentenyl diphosphate-binding residues include Ser225, Ser226, Asn227, and Ser269.

This sequence belongs to the IspH family. Requires [4Fe-4S] cluster as cofactor.

The enzyme catalyses isopentenyl diphosphate + 2 oxidized [2Fe-2S]-[ferredoxin] + H2O = (2E)-4-hydroxy-3-methylbut-2-enyl diphosphate + 2 reduced [2Fe-2S]-[ferredoxin] + 2 H(+). The catalysed reaction is dimethylallyl diphosphate + 2 oxidized [2Fe-2S]-[ferredoxin] + H2O = (2E)-4-hydroxy-3-methylbut-2-enyl diphosphate + 2 reduced [2Fe-2S]-[ferredoxin] + 2 H(+). It functions in the pathway isoprenoid biosynthesis; dimethylallyl diphosphate biosynthesis; dimethylallyl diphosphate from (2E)-4-hydroxy-3-methylbutenyl diphosphate: step 1/1. Its pathway is isoprenoid biosynthesis; isopentenyl diphosphate biosynthesis via DXP pathway; isopentenyl diphosphate from 1-deoxy-D-xylulose 5-phosphate: step 6/6. Catalyzes the conversion of 1-hydroxy-2-methyl-2-(E)-butenyl 4-diphosphate (HMBPP) into a mixture of isopentenyl diphosphate (IPP) and dimethylallyl diphosphate (DMAPP). Acts in the terminal step of the DOXP/MEP pathway for isoprenoid precursor biosynthesis. The protein is 4-hydroxy-3-methylbut-2-enyl diphosphate reductase of Tolumonas auensis (strain DSM 9187 / NBRC 110442 / TA 4).